The primary structure comprises 76 residues: cAMP-dependent protein kinase inhibitor alpha (76 aa).

Thr2 carries the N-acetylthreonine modification. Residues 49 to 76 (KTEGEDDGQRSSTEQSGEAQGEAAKSES) form a disordered region.

It belongs to the PKI family. In terms of tissue distribution, present at high levels in skeletal muscle and brain but is present at lower levels in heart, testis and liver.

Functionally, extremely potent competitive inhibitor of cAMP-dependent protein kinase activity, this protein interacts with the catalytic subunit of the enzyme after the cAMP-induced dissociation of its regulatory chains. The sequence is that of cAMP-dependent protein kinase inhibitor alpha (Pkia) from Mus musculus (Mouse).